A 376-amino-acid chain; its full sequence is Deoxyguanosinetriphosphate triphosphohydrolase-like protein (376 aa).

Residues 62–198 (RLTHSLEVSA…AALADDISYI (137 aa)) form the HD domain.

It belongs to the dGTPase family. Type 2 subfamily.

In Rickettsia canadensis (strain McKiel), this protein is Deoxyguanosinetriphosphate triphosphohydrolase-like protein.